Here is a 1077-residue protein sequence, read N- to C-terminus: Zinc finger protein 518B (1077 aa).

Positions 9–30 are enriched in polar residues; that stretch reads YTTQVNGGPSSLTMSPKQPNRA. Positions 9-35 are disordered; that stretch reads YTTQVNGGPSSLTMSPKQPNRATRTER. 2 consecutive C2H2-type zinc fingers follow at residues 160–182 and 188–211; these read FICS…LVKH and YRCE…RRVH. The disordered stretch occupies residues 372 to 397; the sequence is TSRGDGGTSECLSTEKGSGGQKKMLS. K479 participates in a covalent cross-link: Glycyl lysine isopeptide (Lys-Gly) (interchain with G-Cter in SUMO2). 4 disordered regions span residues 561 to 585, 599 to 622, 675 to 739, and 825 to 852; these read LVSS…GQVS, GEDK…ETAG, KPSS…GSRQ, and QPLT…RKED. Positions 564–574 are enriched in basic and acidic residues; sequence SDRKLEDKQME. Polar residues-rich tracts occupy residues 605-621 and 675-688; these read SQQP…SETA and KPSS…QRRS. Glycyl lysine isopeptide (Lys-Gly) (interchain with G-Cter in SUMO2) cross-links involve residues K847 and K861. The interval 895-914 is disordered; sequence QVNSTKKKNKMQANPGRYFK. The C2H2-type 3 zinc-finger motif lies at 1039-1061; the sequence is FKCWFCGRLYEDQEEWMSHGQRH.

The protein belongs to the krueppel C2H2-type zinc-finger protein family.

Its subcellular location is the nucleus. Functionally, through its association with the EHMT1-EHMT2/G9A and PRC2/EED-EZH2 histone methyltransferase complexes may function in gene silencing, regulating repressive post-translational methylation of histone tails at promoters of target genes. This chain is Zinc finger protein 518B (Znf518b), found in Mus musculus (Mouse).